The chain runs to 44 residues: uncharacterized protein (44 aa).

The helical transmembrane segment at 19–39 (AVGFVVSFGFFAFLFVMATVI) threads the bilayer.

Its subcellular location is the cell membrane. This is an uncharacterized protein from Bacillus subtilis (strain 168).